The primary structure comprises 97 residues: MAPAASGAKKQKKKWSKGKVKDKAQHAVILDKSTSDKLYKDVQSYRLVTVATLVDRLKINGSLARRCLKDLEEKGQIKQVVGHSKMKIYTRAIGADE.

The interval 1–24 (MAPAASGAKKQKKKWSKGKVKDKA) is disordered. Residues 9 to 18 (KKQKKKWSKG) show a composition bias toward basic residues.

This sequence belongs to the eukaryotic ribosomal protein eS25 family. As to quaternary structure, component of the small ribosomal subunit (SSU). Mature N.crassa ribosomes consist of a small (40S) and a large (60S) subunit. The 40S small subunit contains 1 molecule of ribosomal RNA (18S rRNA) and at least 32 different proteins. The large 60S subunit contains 3 rRNA molecules (26S, 5.8S and 5S rRNA) and at least 42 different proteins.

Its subcellular location is the cytoplasm. Component of the ribosome, a large ribonucleoprotein complex responsible for the synthesis of proteins in the cell. The small ribosomal subunit (SSU) binds messenger RNAs (mRNAs) and translates the encoded message by selecting cognate aminoacyl-transfer RNA (tRNA) molecules. The large subunit (LSU) contains the ribosomal catalytic site termed the peptidyl transferase center (PTC), which catalyzes the formation of peptide bonds, thereby polymerizing the amino acids delivered by tRNAs into a polypeptide chain. The nascent polypeptides leave the ribosome through a tunnel in the LSU and interact with protein factors that function in enzymatic processing, targeting, and the membrane insertion of nascent chains at the exit of the ribosomal tunnel. In Neurospora crassa (strain ATCC 24698 / 74-OR23-1A / CBS 708.71 / DSM 1257 / FGSC 987), this protein is Small ribosomal subunit protein eS25 (rps-25).